The chain runs to 157 residues: Ribosome maturation factor RimP (157 aa).

Belongs to the RimP family.

Its subcellular location is the cytoplasm. Functionally, required for maturation of 30S ribosomal subunits. The polypeptide is Ribosome maturation factor RimP (Thermobifida fusca (strain YX)).